The sequence spans 1942 residues: MSSDAEMAVFGEAAPYLRKSEKERIEAQNRPFDAKTSVFVAEPKESFVKGTIQSKDAGKVTVKTEAGATLTVKEDQIFPMNPPKYDKIEDMAMMTHLHEPAVLYNLKERYAAWMIYTYSGLFCVTVNPYKWLPVYNPEVVAAYRGKKRQEAPPHIFSISDNAYQFMLTDRENQSILITGESGAGKTVNTKRVIQYFATIAVTGDKKKEEATSGKMQGTLEDQIISANPLLEAFGNAKTVRNDNSSRFGKFIRIHFGTTGKLASADIETYLLEKSRVTFQLKAERSYHIFYQITSNKKPELIEMLLITTNPYDYPFVSQGEISVASIDDQEELMATDSAIDILGFTNDEKVSIYKLTGAVMHYGNMKFKQKQREEQAEPDGTEVADKAAYLQGLNSADLLKALCYPRVKVGNEYVTKGQTVEQVTNAVGALAKAMYEKMFLWMVTRINQQLDTKQPRQYFIGVLDIAGFEIFDFNSLEQLCINFTNEKLQQFFNHHMFVLEQEEYKKEGIEWTFIDFGMDLAACIELIEKPMGIFSILEEECMFPKATDTSFKNKLYEQHLGKSANFQKPKVVKGKAEAHFSLIHYAGTVDYNITGWLDKNKDPLNETVVGLYQKSSVKTLAYLFSGAQTAEAEASSGGAAKKGAKKKGSSFQTVSALFRENLNKLMTNLRSTHPHFVRCIIPNETKTPGAMEHELVLHQLRCNGVLEGIRICRKGFPSRILYADFKQRYKVLNASAIPEGQYIDSKKASEKLLGSIDIDHTQYKFGHTKVFFKAGLLGLLEEMRDDKLAQLITRTQAMCRGFLARVEYQKMVERRESIFCIQYNIRAFMNVKHWPWMKLFFKIKPLLKSAETEKEMATMKEEFQKTKDDLAKSEAKRKELEEKMVSLLKEKNDLQLQVQAEAEGLADAEERCDQLIKTKIQLEAKIKEVTERAEDEEEINAELTAKKRKLEDECSELKKDIDDLELTLAKVEKEKHATENKVKNLTEEMAGLDETIAKLTKEKKALQEAHQQTLDDLQAEEDKVNTLTKAKIKLEQQVDDLEGSLEQEKKLRMDLERAKRKLEGDLKLAQESIMDIENEKQQLDERLKKKEFEMSNLQSKIEDEQAIGIQLQKKIKELQARIEELEEEIEAERASRAKAEKQRSDLSRELEEISERLEEAGGATSAQIEMNKKREAEFQKMRRDLEEATLQHEATAATLRKKHADSVAELGEQIDNLQRVKQKLEKEKSEMKMEIDDLASNVETVSKAKGNLEKMCRTLEDQVSELKSKEEEQQRLINDLTTQRGRLQTESGEFSRQLDEKEALVSQLSRGKQAFTQQIEELKRQLEEEVKAKNALAHALQSSRHDCDLLREQYEEEQESKAELQRALSKANSEVAQWRTKYETDAIQRTEELEEAKKKLAQRLQAAEEHVEAVNAKCASLEKTKQRLQNEVEDLMLDVERTNAACAALDKKQRNFDKILAEWKQKYEETHAELEASQKEARSLGTELFKMKNAYEESLDQLETLKRENKNLQQEISDLTEQIAEGGKRIHELEKIKKQVEQEKCELQAALEEAEASLEHEEGKILRIQLELNQVKSEIDRKIAEKDEEIDQLKRNHIRVVESMQSTLDAEIRSRNDAIRIKKKMEGDLNEMEIQLNHSNRMAAEALRNYRNTQGILKDTQLHLDDALRGQEDLKEQLAMVERRANLLQAEIEELRATLEQTERSRKIAEQELLDASERVQLLHTQNTSLINTKKKLETDISQIQGEMEDIVQEARNAEEKAKKAITDAAMMAEELKKEQDTSAHLERMKKNMEQTVKDLQLRLDEAEQLALKGGKKQIQKLEARVRELEGEVESEQKRNAEAVKGLRKHERRVKELTYQTEEDRKNILRLQDLVDKLQAKVKSYKRQAEEAEEQSNTNLSKFRKIQHELEEAEERADIAESQVNKLRVKSREVHTKIISEE.

In terms of domain architecture, Myosin N-terminal SH3-like spans 33 to 82; the sequence is DAKTSVFVAEPKESFVKGTIQSKDAGKVTVKTEAGATLTVKEDQIFPMNP. A phosphothreonine mark is found at T64 and T69. The 700-residue stretch at 86 to 785 folds into the Myosin motor domain; the sequence is DKIEDMAMMT…LLGLLEEMRD (700 aa). ATP is bound at residue 179–186; sequence GESGAGKT. A Phosphotyrosine modification is found at Y389. Phosphothreonine is present on T419. S625 carries the post-translational modification Phosphoserine. The actin-binding stretch occupies residues 662–684; the sequence is LNKLMTNLRSTHPHFVRCIIPNE. H760 is modified (pros-methylhistidine). An IQ domain is found at 788-817; that stretch reads LAQLITRTQAMCRGFLARVEYQKMVERRES. Positions 849–1930 form a coiled coil; sequence SAETEKEMAT…ESQVNKLRVK (1082 aa). Residues S1095 and S1099 each carry the phosphoserine modification. Positions 1130–1175 are disordered; sequence EAERASRAKAEKQRSDLSRELEEISERLEEAGGATSAQIEMNKKRE. Residues 1131 to 1159 are compositionally biased toward basic and acidic residues; it reads AERASRAKAEKQRSDLSRELEEISERLEE. Phosphoserine occurs at positions 1165 and 1240. T1244 is modified (phosphothreonine). S1246 bears the Phosphoserine mark. A Phosphothreonine modification is found at T1258. S1264 is modified (phosphoserine). T1289 is subject to Phosphothreonine. 4 positions are modified to phosphoserine: S1291, S1295, S1306, and S1309. Position 1467 is a phosphotyrosine (Y1467). The residue at position 1470 (T1470) is a Phosphothreonine. S1477 is subject to Phosphoserine. Y1495 carries the phosphotyrosine modification. Residue S1498 is modified to Phosphoserine. Residue T1504 is modified to Phosphothreonine. S1517 is modified (phosphoserine). The residue at position 1520 (T1520) is a Phosphothreonine. Phosphoserine is present on residues S1557, S1577, S1603, S1606, S1717, and S1729. Phosphothreonine occurs at positions 1733 and 1739. The residue at position 1742 (S1742) is a Phosphoserine.

The protein belongs to the TRAFAC class myosin-kinesin ATPase superfamily. Myosin family. In terms of assembly, muscle myosin is a hexameric protein that consists of 2 heavy chain subunits (MHC), 2 alkali light chain subunits (MLC) and 2 regulatory light chain subunits (MLC-2). Interacts with GCSAM. In terms of tissue distribution, expressed in type 2a myofibers in the tibialis anterior and soleus muscles (at protein level).

Its subcellular location is the cytoplasm. It localises to the myofibril. In terms of biological role, myosins are actin-based motor molecules with ATPase activity essential for muscle contraction. In Mus musculus (Mouse), this protein is Myosin-2.